Here is a 175-residue protein sequence, read N- to C-terminus: Peptide deformylase (175 aa).

C96 and H138 together coordinate Fe cation. Residue E139 is part of the active site. H142 contacts Fe cation.

It belongs to the polypeptide deformylase family. The cofactor is Fe(2+).

It catalyses the reaction N-terminal N-formyl-L-methionyl-[peptide] + H2O = N-terminal L-methionyl-[peptide] + formate. Its function is as follows. Removes the formyl group from the N-terminal Met of newly synthesized proteins. Requires at least a dipeptide for an efficient rate of reaction. N-terminal L-methionine is a prerequisite for activity but the enzyme has broad specificity at other positions. The polypeptide is Peptide deformylase (Campylobacter jejuni subsp. jejuni serotype O:2 (strain ATCC 700819 / NCTC 11168)).